The sequence spans 170 residues: Large ribosomal subunit protein bL9 (170 aa).

Residues 149–170 (RTEEADAEESAAEEPAVEEAAE) form a disordered region. A compositionally biased stretch (acidic residues) spans 153–170 (ADAEESAAEEPAVEEAAE).

It belongs to the bacterial ribosomal protein bL9 family.

Its function is as follows. Binds to the 23S rRNA. In Oleidesulfovibrio alaskensis (strain ATCC BAA-1058 / DSM 17464 / G20) (Desulfovibrio alaskensis), this protein is Large ribosomal subunit protein bL9.